A 264-amino-acid chain; its full sequence is Small ribosomal subunit protein uS2 (264 aa).

It belongs to the universal ribosomal protein uS2 family.

The sequence is that of Small ribosomal subunit protein uS2 from Helicobacter pylori (strain Shi470).